A 544-amino-acid polypeptide reads, in one-letter code: Chaperonin GroEL (544 aa).

ATP contacts are provided by residues 29–32 (TLGP), K50, 86–90 (DGTTT), G414, 479–481 (DAA), and D495.

It belongs to the chaperonin (HSP60) family. In terms of assembly, forms a cylinder of 14 subunits composed of two heptameric rings stacked back-to-back. Interacts with the co-chaperonin GroES.

The protein localises to the cytoplasm. It carries out the reaction ATP + H2O + a folded polypeptide = ADP + phosphate + an unfolded polypeptide.. Functionally, together with its co-chaperonin GroES, plays an essential role in assisting protein folding. The GroEL-GroES system forms a nano-cage that allows encapsulation of the non-native substrate proteins and provides a physical environment optimized to promote and accelerate protein folding. The chain is Chaperonin GroEL from Treponema denticola (strain ATCC 35405 / DSM 14222 / CIP 103919 / JCM 8153 / KCTC 15104).